A 200-amino-acid polypeptide reads, in one-letter code: Eukaryotic translation initiation factor isoform 4E (200 aa).

MRNA contacts are provided by residues 44–49 (QGVAWG), Lys76, and 94–95 (WE). Cys99 and Cys138 are joined by a disulfide. MRNA is bound by residues 145 to 150 (RRSQDK) and 189 to 192 (KRER).

This sequence belongs to the eukaryotic initiation factor 4E family. In terms of assembly, EIF4F is a multi-subunit complex, the composition of which varies with external and internal environmental conditions. It is composed of at least EIF4A, EIF4E and EIF4G. EIF4E is also known to interact with other partners. In higher plants two isoforms of EIF4F have been identified, named isoform EIF4F and isoform EIF(iso)4F. Isoform EIF4F has subunits p220 and p26, whereas isoform EIF(iso)4F has subunits p82 and p28. As to quaternary structure, (Microbial infection) Interacts with viral genome-linked protein (VPg); this interaction is possible in susceptible hosts but impaired in resistant plants. According to the redox status, the Cys-99-Cys-138 disulfide bridge may have a role in regulating protein function by affecting its ability to bind capped mRNA. Mostly expressed in roots and leaves, and, to a lower extent, in stems, flowers and immature green fruits.

It is found in the cytoplasm. It localises to the nucleus. Functionally, component of the protein complex eIF4F, which is involved in the recognition of the mRNA cap, ATP-dependent unwinding of 5'-terminal secondary structure and recruitment of mRNA to the ribosome. Recognizes and binds the 7-methylguanosine-containing mRNA cap during an early step in the initiation of protein synthesis and facilitates ribosome binding by inducing the unwinding of the mRNAs secondary structures. Key component of recessive resistance to potyviruses. (Microbial infection) Susceptibility host factor required for viral infection by recruiting viral RNAs to the host ribosomal complex via an interaction with viral genome-linked protein (VPg). This Solanum lycopersicum (Tomato) protein is Eukaryotic translation initiation factor isoform 4E.